The primary structure comprises 180 residues: Large ribosomal subunit protein uL5 (180 aa).

It belongs to the universal ribosomal protein uL5 family. As to quaternary structure, part of the 50S ribosomal subunit; part of the 5S rRNA/L5/L18/L25 subcomplex. Contacts the 5S rRNA and the P site tRNA. Forms a bridge to the 30S subunit in the 70S ribosome.

Functionally, this is one of the proteins that bind and probably mediate the attachment of the 5S RNA into the large ribosomal subunit, where it forms part of the central protuberance. In the 70S ribosome it contacts protein S13 of the 30S subunit (bridge B1b), connecting the 2 subunits; this bridge is implicated in subunit movement. Contacts the P site tRNA; the 5S rRNA and some of its associated proteins might help stabilize positioning of ribosome-bound tRNAs. This is Large ribosomal subunit protein uL5 from Synechococcus sp. (strain JA-2-3B'a(2-13)) (Cyanobacteria bacterium Yellowstone B-Prime).